The following is a 651-amino-acid chain: NADH oxidase (651 aa).

Gln104 lines the FMN pocket. Tyr175 acts as the Proton donor in catalysis. FMN contacts are provided by residues Arg223 and 320 to 321 (GR). Cys344, Cys347, Cys351, and Cys364 together coordinate [4Fe-4S] cluster. Ala396, Glu415, Gln423, Lys433, and Ala460 together coordinate FAD.

The protein in the N-terminal section; belongs to the NADH:flavin oxidoreductase/NADH oxidase family. As to quaternary structure, homohexamer. FMN serves as cofactor. Requires FAD as cofactor. The cofactor is [4Fe-4S] cluster. The N-terminus is blocked.

It catalyses the reaction A + NADH + H(+) = AH2 + NAD(+). Its function is as follows. Reduces a range of alternative electron acceptors. This Thermoanaerobacter brockii (Thermoanaerobium brockii) protein is NADH oxidase.